Consider the following 645-residue polypeptide: ATP-dependent zinc metalloprotease FtsH 3 (645 aa).

Topologically, residues 1–11 (MQNKRNQSRVL) are cytoplasmic. A helical membrane pass occupies residues 12–32 (WLLLIYITIGIFIYVGVNSLI). Topologically, residues 33-110 (GTPDVSKIEY…YVRSLENSWW (78 aa)) are periplasmic. Residues 111 to 131 (ISILTFLLPVFLLIFLFTFLF) form a helical membrane-spanning segment. Residues 132–645 (RSSGGGANQG…ENNLIERKGI (514 aa)) are Cytoplasmic-facing. 202–209 (GEPGTGKT) contributes to the ATP binding site. His-424 contacts Zn(2+). Glu-425 is a catalytic residue. Zn(2+) is bound by residues His-428 and Asp-501.

It in the central section; belongs to the AAA ATPase family. The protein in the C-terminal section; belongs to the peptidase M41 family. In terms of assembly, homohexamer. Zn(2+) serves as cofactor.

The protein localises to the cell inner membrane. Acts as a processive, ATP-dependent zinc metallopeptidase for both cytoplasmic and membrane proteins. Plays a role in the quality control of integral membrane proteins. This chain is ATP-dependent zinc metalloprotease FtsH 3, found in Petrotoga mobilis (strain DSM 10674 / SJ95).